The primary structure comprises 827 residues: 6-phosphofructo-2-kinase 1 (827 aa).

2 disordered regions span residues 1–97 (MFKP…ENSA) and 149–175 (TRHH…DGLI). Residues 31–41 (SQDSSYDLLSR) are compositionally biased toward low complexity. The span at 42 to 59 (SSDDKIDAEKGPHDELSK) shows a compositional bias: basic and acidic residues. Residues 72-97 (TPISSNWNSPGITEENTPSDSPENSA) show a composition bias toward polar residues. Serine 92 carries the phosphoserine modification. Threonine 157 bears the Phosphothreonine mark. ATP is bound at residue 190 to 197 (GLPATGKS). Active-site residues include aspartate 277 and cysteine 309. Arginine 343 provides a ligand contact to beta-D-fructose 6-phosphate. Serine 404 acts as the Phosphoserine intermediate in catalysis. Glutamate 497 is a catalytic residue. Histidine 565 (proton donor) is an active-site residue. Phosphoserine is present on residues serine 644, serine 652, serine 659, and serine 667. 2 disordered regions span residues 649–704 (APPS…SNFN) and 799–827 (HGKD…QSHV). Low complexity predominate over residues 671-682 (SASSSQSELSEQ). Over residues 683 to 704 (PKNSVSAQTGSNNTTLIGSNFN) the composition is skewed to polar residues.

The catalysed reaction is beta-D-fructose 6-phosphate + ATP = beta-D-fructose 2,6-bisphosphate + ADP + H(+). Its activity is regulated as follows. Phosphorylation results in the activation of the kinase activity. Functionally, synthesis of fructose 2,6-bisphosphate. The chain is 6-phosphofructo-2-kinase 1 (PFK26) from Saccharomyces cerevisiae (strain ATCC 204508 / S288c) (Baker's yeast).